A 416-amino-acid chain; its full sequence is Alpha-1,3/1,6-mannosyltransferase ALG2 (416 aa).

Residues 1–84 (MAEEQGRERD…LPRGLGWGGR (84 aa)) are Cytoplasmic-facing. An intramembrane region (helical) is located at residues 85 to 105 (GAAVCAYVRMVFLALYVLFLA). At 106-416 (DEEFDVVVCD…LYRYVTKLLV (311 aa)) the chain is on the cytoplasmic side.

The protein belongs to the glycosyltransferase group 1 family. Glycosyltransferase 4 subfamily.

It localises to the endoplasmic reticulum membrane. It carries out the reaction a beta-D-Man-(1-&gt;4)-beta-D-GlcNAc-(1-&gt;4)-alpha-D-GlcNAc-diphospho-di-trans,poly-cis-dolichol + GDP-alpha-D-mannose = an alpha-D-Man-(1-&gt;3)-beta-D-Man-(1-&gt;4)-beta-D-GlcNAc-(1-&gt;4)-alpha-D-GlcNAc-diphospho-di-trans,poly-cis-dolichol + GDP + H(+). The enzyme catalyses an alpha-D-Man-(1-&gt;3)-beta-D-Man-(1-&gt;4)-beta-D-GlcNAc-(1-&gt;4)-alpha-D-GlcNAc-diphospho-di-trans,poly-cis-dolichol + GDP-alpha-D-mannose = an alpha-D-Man-(1-&gt;3)-[alpha-D-Man-(1-&gt;6)]-beta-D-Man-(1-&gt;4)-beta-D-GlcNAc-(1-&gt;4)-alpha-D-GlcNAc-diphospho-di-trans,poly-cis-dolichol + GDP + H(+). It catalyses the reaction a beta-D-Man-(1-&gt;4)-beta-D-GlcNAc-(1-&gt;4)-alpha-D-GlcNAc-diphospho-di-trans,poly-cis-dolichol + GDP-alpha-D-mannose = an alpha-D-Man-(1-&gt;6)-beta-D-Man-(1-&gt;4)-beta-D-GlcNAc-(1-&gt;4)-alpha-D-GlcNAc-diphospho-di-trans,poly-cis-dolichol + GDP + H(+). The catalysed reaction is an alpha-D-Man-(1-&gt;6)-beta-D-Man-(1-&gt;4)-beta-D-GlcNAc-(1-&gt;4)-alpha-D-GlcNAc-diphospho-di-trans,poly-cis-dolichol + GDP-alpha-D-mannose = an alpha-D-Man-(1-&gt;3)-[alpha-D-Man-(1-&gt;6)]-beta-D-Man-(1-&gt;4)-beta-D-GlcNAc-(1-&gt;4)-alpha-D-GlcNAc-diphospho-di-trans,poly-cis-dolichol + GDP + H(+). It participates in protein modification; protein glycosylation. Mannosyltransferase that operates in the biosynthetic pathway of dolichol-linked oligosaccharides, the glycan precursors employed in protein asparagine (N)-glycosylation. The assembly of dolichol-linked oligosaccharides begins on the cytosolic side of the endoplasmic reticulum membrane and finishes in its lumen. The sequential addition of sugars to dolichol pyrophosphate produces dolichol-linked oligosaccharides containing fourteen sugars, including two GlcNAcs, nine mannoses and three glucoses. Once assembled, the oligosaccharide is transferred from the lipid to nascent proteins by oligosaccharyltransferases. Catalyzes, on the cytoplasmic face of the endoplasmic reticulum, the addition of the second and third mannose residues to the dolichol-linked oligosaccharide chain, to produce Man3GlcNAc(2)-PP-dolichol core oligosaccharide. Man3GlcNAc(2)-PP-dolichol is a substrate for ALG11, the following enzyme in the biosynthetic pathway. While both alpha 1,3 and alpha 1,6 linkages are possible, the sequential addition of alpha 1,3 followed by alpha 1,6 is probably the preferred route. The protein is Alpha-1,3/1,6-mannosyltransferase ALG2 (ALG2) of Homo sapiens (Human).